The following is a 539-amino-acid chain: Phosphoenolpyruvate carboxykinase (ATP) (539 aa).

Substrate contacts are provided by arginine 64, tyrosine 206, and lysine 212. ATP contacts are provided by residues lysine 212, histidine 231, and 247-255; that span reads GLSGTGKTT. Residues lysine 212 and histidine 231 each coordinate Mn(2+). Residue aspartate 268 participates in Mn(2+) binding. Residues glutamate 296, arginine 332, 448-449, and threonine 454 contribute to the ATP site; that span reads RI. Arginine 332 serves as a coordination point for substrate.

Belongs to the phosphoenolpyruvate carboxykinase (ATP) family. Monomer. It depends on Mn(2+) as a cofactor.

The protein localises to the cytoplasm. It catalyses the reaction oxaloacetate + ATP = phosphoenolpyruvate + ADP + CO2. It participates in carbohydrate biosynthesis; gluconeogenesis. Its function is as follows. Involved in the gluconeogenesis. Catalyzes the conversion of oxaloacetate (OAA) to phosphoenolpyruvate (PEP) through direct phosphoryl transfer between the nucleoside triphosphate and OAA. The protein is Phosphoenolpyruvate carboxykinase (ATP) of Yersinia pseudotuberculosis serotype O:1b (strain IP 31758).